We begin with the raw amino-acid sequence, 428 residues long: CinA-like protein (428 aa).

It belongs to the CinA family.

This is CinA-like protein from Gemmatimonas aurantiaca (strain DSM 14586 / JCM 11422 / NBRC 100505 / T-27).